We begin with the raw amino-acid sequence, 338 residues long: F420-dependent glucose-6-phosphate dehydrogenase (338 aa).

A coenzyme F420-(gamma-Glu)n-binding site is contributed by aspartate 40. Catalysis depends on histidine 41, which acts as the Proton donor. Coenzyme F420-(gamma-Glu)n is bound by residues threonine 77 and 108–109; that span reads TG. Catalysis depends on glutamate 110, which acts as the Proton acceptor. Residues asparagine 113, 178–179, and 181–182 contribute to the coenzyme F420-(gamma-Glu)n site; these read GG and VV. Substrate is bound by residues threonine 196, lysine 199, lysine 260, and arginine 284.

This sequence belongs to the F420-dependent glucose-6-phosphate dehydrogenase family. As to quaternary structure, homodimer.

It catalyses the reaction oxidized coenzyme F420-(gamma-L-Glu)(n) + D-glucose 6-phosphate + H(+) = 6-phospho-D-glucono-1,5-lactone + reduced coenzyme F420-(gamma-L-Glu)(n). Functionally, catalyzes the coenzyme F420-dependent oxidation of glucose 6-phosphate (G6P) to 6-phosphogluconolactone. The sequence is that of F420-dependent glucose-6-phosphate dehydrogenase from Gordonia bronchialis (strain ATCC 25592 / DSM 43247 / BCRC 13721 / JCM 3198 / KCTC 3076 / NBRC 16047 / NCTC 10667) (Rhodococcus bronchialis).